The primary structure comprises 778 residues: uncharacterized protein (778 aa).

Composition is skewed to polar residues over residues 1-11, 18-34, and 41-51; these read MPISSPGTRCS, TLQQ…QSLG, and GSITENYVQDS. Positions 1-60 are disordered; sequence MPISSPGTRCSSDLKDPTLQQYSAESVSTEQSLGTFEESKGSITENYVQDSSVDEHDDGN. A run of 2 helical transmembrane segments spans residues 356 to 381 and 401 to 423; these read YILM…APII and GFLA…GAHI.

The protein belongs to the TMCO4 family.

It is found in the golgi apparatus membrane. This is an uncharacterized protein from Schizosaccharomyces pombe (strain 972 / ATCC 24843) (Fission yeast).